Here is a 273-residue protein sequence, read N- to C-terminus: Shikimate dehydrogenase (NADP(+)) (273 aa).

Shikimate is bound by residues 14–16 (SKS) and T61. K65 functions as the Proton acceptor in the catalytic mechanism. D77 is a binding site for NADP(+). Residues N86 and D102 each coordinate shikimate. Residues 126-130 (GAGGA), 150-155 (NRTYEK), and M213 each bind NADP(+). Y215 is a binding site for shikimate. Residue G237 participates in NADP(+) binding.

It belongs to the shikimate dehydrogenase family. Homodimer.

It carries out the reaction shikimate + NADP(+) = 3-dehydroshikimate + NADPH + H(+). The protein operates within metabolic intermediate biosynthesis; chorismate biosynthesis; chorismate from D-erythrose 4-phosphate and phosphoenolpyruvate: step 4/7. Involved in the biosynthesis of the chorismate, which leads to the biosynthesis of aromatic amino acids. Catalyzes the reversible NADPH linked reduction of 3-dehydroshikimate (DHSA) to yield shikimate (SA). This Aliivibrio salmonicida (strain LFI1238) (Vibrio salmonicida (strain LFI1238)) protein is Shikimate dehydrogenase (NADP(+)).